Consider the following 160-residue polypeptide: Transmembrane protein 191A (160 aa).

A helical transmembrane segment spans residues 24–44 (FCFPLDFVSNLFWIFASKFII).

It belongs to the TMEM191 family.

The protein localises to the membrane. This Homo sapiens (Human) protein is Transmembrane protein 191A (TMEM191A).